A 463-amino-acid chain; its full sequence is Siroheme synthase (463 aa).

The segment at 1 to 203 is precorrin-2 dehydrogenase /sirohydrochlorin ferrochelatase; it reads MDYLPLFHKL…GQGAEAERLL (203 aa). NAD(+) is bound by residues 22 to 23 and 43 to 44; these read EI and PE. A Phosphoserine modification is found at Ser128. Residues 216-463 are uroporphyrinogen-III C-methyltransferase; sequence GEVYLVGAGP…LAWFEGAQNS (248 aa). Pro225 lines the S-adenosyl-L-methionine pocket. Catalysis depends on Asp248, which acts as the Proton acceptor. The active-site Proton donor is the Lys270. Residues 301-303, Ile306, 331-332, Met383, and Gly412 each bind S-adenosyl-L-methionine; these read GGD and TA.

It in the N-terminal section; belongs to the precorrin-2 dehydrogenase / sirohydrochlorin ferrochelatase family. The protein in the C-terminal section; belongs to the precorrin methyltransferase family.

The enzyme catalyses uroporphyrinogen III + 2 S-adenosyl-L-methionine = precorrin-2 + 2 S-adenosyl-L-homocysteine + H(+). It catalyses the reaction precorrin-2 + NAD(+) = sirohydrochlorin + NADH + 2 H(+). It carries out the reaction siroheme + 2 H(+) = sirohydrochlorin + Fe(2+). The protein operates within cofactor biosynthesis; adenosylcobalamin biosynthesis; precorrin-2 from uroporphyrinogen III: step 1/1. It functions in the pathway cofactor biosynthesis; adenosylcobalamin biosynthesis; sirohydrochlorin from precorrin-2: step 1/1. It participates in porphyrin-containing compound metabolism; siroheme biosynthesis; precorrin-2 from uroporphyrinogen III: step 1/1. Its pathway is porphyrin-containing compound metabolism; siroheme biosynthesis; siroheme from sirohydrochlorin: step 1/1. The protein operates within porphyrin-containing compound metabolism; siroheme biosynthesis; sirohydrochlorin from precorrin-2: step 1/1. Functionally, multifunctional enzyme that catalyzes the SAM-dependent methylations of uroporphyrinogen III at position C-2 and C-7 to form precorrin-2 via precorrin-1. Then it catalyzes the NAD-dependent ring dehydrogenation of precorrin-2 to yield sirohydrochlorin. Finally, it catalyzes the ferrochelation of sirohydrochlorin to yield siroheme. This is Siroheme synthase from Pseudomonas entomophila (strain L48).